A 342-amino-acid polypeptide reads, in one-letter code: Dihydroorotase (342 aa).

Positions 13 and 15 each coordinate Zn(2+). Substrate is bound by residues 15 to 17 (HLR) and N41. Residues K98, H135, and H173 each coordinate Zn(2+). Position 98 is an N6-carboxylysine (K98). H135 provides a ligand contact to substrate. L218 serves as a coordination point for substrate. Position 246 (D246) interacts with Zn(2+). D246 is an active-site residue. Substrate contacts are provided by H250 and A262.

It belongs to the metallo-dependent hydrolases superfamily. DHOase family. Class II DHOase subfamily. Homodimer. Requires Zn(2+) as cofactor.

It catalyses the reaction (S)-dihydroorotate + H2O = N-carbamoyl-L-aspartate + H(+). It participates in pyrimidine metabolism; UMP biosynthesis via de novo pathway; (S)-dihydroorotate from bicarbonate: step 3/3. In terms of biological role, catalyzes the reversible cyclization of carbamoyl aspartate to dihydroorotate. The chain is Dihydroorotase from Vibrio campbellii (strain ATCC BAA-1116).